Reading from the N-terminus, the 150-residue chain is Aspartate 1-decarboxylase 2 (150 aa).

S24 (schiff-base intermediate with substrate; via pyruvic acid) is an active-site residue. S24 is modified (pyruvic acid (Ser)). T56 contributes to the substrate binding site. The active-site Proton donor is the Y57. Substrate is bound at residue G72–A74.

The protein belongs to the PanD family. As to quaternary structure, heterooctamer of four alpha and four beta subunits. Pyruvate serves as cofactor. Is synthesized initially as an inactive proenzyme, which is activated by self-cleavage at a specific serine bond to produce a beta-subunit with a hydroxyl group at its C-terminus and an alpha-subunit with a pyruvoyl group at its N-terminus.

The protein localises to the cytoplasm. It carries out the reaction L-aspartate + H(+) = beta-alanine + CO2. The protein operates within cofactor biosynthesis; (R)-pantothenate biosynthesis; beta-alanine from L-aspartate: step 1/1. Catalyzes the pyruvoyl-dependent decarboxylation of aspartate to produce beta-alanine. In Mesorhizobium japonicum (strain LMG 29417 / CECT 9101 / MAFF 303099) (Mesorhizobium loti (strain MAFF 303099)), this protein is Aspartate 1-decarboxylase 2.